A 448-amino-acid chain; its full sequence is Proline-rich protein 4 (448 aa).

The first 29 residues, 1–29 (MRILPEPRGSVPCLLLLVSVLLSATLSLA), serve as a signal peptide directing secretion. 46 tandem repeats follow at residues 152–156 (PMPKL), 157–161 (PPFKG), 165–169 (PFPLP), 170–174 (PPLEL), 175–179 (PPFLK), 183–187 (PPKYS), 188–193 (PPVEVP), 194–198 (PPVPV), 201–205 (PPPKK), 208–212 (PPPVP), 216–220 (PPPKK), 222–226 (VPPPV), 227–231 (PVYKP), 232–236 (PPKVE), 238–242 (PPPIP), 245–249 (PCPPK), 250–254 (PPKIE), 256–259 (PPPV), 260–264 (PVYKP), 265–270 (PPKIEK), 271–278 (PPPVPVYK), 279–284 (PPPKIE), 286–294 (PPPVPVHKL), 295–299 (PKKPC), 300–304 (PPKKV), 306–311 (PPPVPV), 314–320 (PPTKKPC), 321–327 (PPKKVDP), 328–334 (PPVPVHK), 335–341 (PPPKIVI), 342–348 (PPPKIEH), 349–356 (PPPVPVYK), 357–363 (PPPKIEH), 364–368 (PPIYI), 369–374 (PPIVKK), 378–384 (PPVPIYK), 385–389 (PPVVI), 390–394 (PKKPC), 395–402 (PPPVPVYK), 403–407 (PPVVV), 409–413 (PKKPC), 414–419 (PPLPQL), 420–424 (PPLPK), 425–429 (FPPLP), 430–434 (PKYIH), and 442–446 (PPLPP). Residues 152-446 (PMPKLPPFKG…KFGKWPPLPP (295 aa)) form a 46 X 5 AA approximate repeats region. Residues 240–290 (PIPKKPCPPKPPKIEHPPPVPVYKPPPKIEKPPPVPVYKPPPKIEHPPPVP) are compositionally biased toward pro residues. Residues 240-345 (PIPKKPCPPK…PPKIVIPPPK (106 aa)) are disordered. 2 stretches are compositionally biased toward pro residues: residues 306–319 (PPPVPVHKPPTKKP) and 327–345 (PPPVPVHKPPPKIVIPPPK).

Belongs to the plant proline-rich protein superfamily. Mostly expressed in aerial organs, particularly in expanding leaves, stems, flowers, and siliques. Also present in stipules.

Its subcellular location is the secreted. The protein localises to the cell wall. This is Proline-rich protein 4 (PRP4) from Arabidopsis thaliana (Mouse-ear cress).